Reading from the N-terminus, the 320-residue chain is Malate dehydrogenase (320 aa).

NAD(+)-binding positions include 10–15 (GAGQIG) and Asp34. Arg83 and Arg89 together coordinate substrate. Residues Asn96 and 119-121 (ITN) contribute to the NAD(+) site. The substrate site is built by Asn121 and Arg152. Catalysis depends on His176, which acts as the Proton acceptor.

Belongs to the LDH/MDH superfamily. MDH type 3 family.

The catalysed reaction is (S)-malate + NAD(+) = oxaloacetate + NADH + H(+). Functionally, catalyzes the reversible oxidation of malate to oxaloacetate. This is Malate dehydrogenase from Methylobacterium nodulans (strain LMG 21967 / CNCM I-2342 / ORS 2060).